Reading from the N-terminus, the 83-residue chain is Arminin 3a (83 aa).

A signal peptide spans methionine 1–alanine 18. The propeptide occupies arginine 19–alanine 57. At alanine 80 the chain carries Alanine amide.

The protein belongs to the arminin family. Expressed in entodermal epithelium along the body column.

It is found in the secreted. The protein localises to the target cell membrane. Antimicrobial peptide with a broad-spectrum antimicrobial activity. Keeps its antibacterial activity under a wide range of salt concentrations that mimic physiological conditions of human blood, which is surprising, since Hydra is an obligate freshwater animal with nearly no salt tolerance. Does not affect red blood cells. The sequence is that of Arminin 3a from Hydra vulgaris (Hydra).